Reading from the N-terminus, the 59-residue chain is Protein translocase subunit SecE (59 aa).

Residues 35 to 55 (IVAIGIAIIGVVGFIIVLIGE) form a helical membrane-spanning segment.

It belongs to the SecE/SEC61-gamma family. Component of the Sec protein translocase complex. Heterotrimer consisting of SecY (alpha), SecG (beta) and SecE (gamma) subunits. The heterotrimers can form oligomers, although 1 heterotrimer is thought to be able to translocate proteins. Interacts with the ribosome. May interact with SecDF, and other proteins may be involved.

It localises to the cell membrane. In terms of biological role, essential subunit of the Sec protein translocation channel SecYEG. Clamps together the 2 halves of SecY. May contact the channel plug during translocation. The sequence is that of Protein translocase subunit SecE from Methanobrevibacter smithii (strain ATCC 35061 / DSM 861 / OCM 144 / PS).